The following is a 203-amino-acid chain: MLAKGSEPWLFTATFITALFAVLSRAMNSSHLNHVAYIAMAMTFFMVLFFRDPERKVEVSDTYMISPADGTVIDIRGRKICIFMFLQNVHVNRAPISGKIREITYKKGGYLPAFCKDSERNERNEFIIHSKYGDVSVMQIAGTIARRIVSYSRVNDNIEQGQRIGMIRLGSRVDVTIPHDFEIIVRKGERVLAGKTIIATIKK.

Ser-171 functions as the Schiff-base intermediate with substrate; via pyruvic acid in the catalytic mechanism. Position 171 is a pyruvic acid (Ser); by autocatalysis (Ser-171).

This sequence belongs to the phosphatidylserine decarboxylase family. PSD-A subfamily. Heterodimer of a large membrane-associated beta subunit and a small pyruvoyl-containing alpha subunit. It depends on pyruvate as a cofactor. In terms of processing, is synthesized initially as an inactive proenzyme. Formation of the active enzyme involves a self-maturation process in which the active site pyruvoyl group is generated from an internal serine residue via an autocatalytic post-translational modification. Two non-identical subunits are generated from the proenzyme in this reaction, and the pyruvate is formed at the N-terminus of the alpha chain, which is derived from the carboxyl end of the proenzyme. The post-translation cleavage follows an unusual pathway, termed non-hydrolytic serinolysis, in which the side chain hydroxyl group of the serine supplies its oxygen atom to form the C-terminus of the beta chain, while the remainder of the serine residue undergoes an oxidative deamination to produce ammonia and the pyruvoyl prosthetic group on the alpha chain.

The protein resides in the cell membrane. It catalyses the reaction archaetidylserine + H(+) = archaetidylethanolamine + CO2. Functionally, catalyzes the formation of archaetidylethanolamine (PtdEtn) from archaetidylserine (PtdSer). This chain is Putative archaetidylserine decarboxylase proenzyme, found in Methanosarcina barkeri (strain Fusaro / DSM 804).